A 75-amino-acid chain; its full sequence is Small ribosomal subunit protein bS18 (75 aa).

It belongs to the bacterial ribosomal protein bS18 family. Part of the 30S ribosomal subunit. Forms a tight heterodimer with protein bS6.

Its function is as follows. Binds as a heterodimer with protein bS6 to the central domain of the 16S rRNA, where it helps stabilize the platform of the 30S subunit. This chain is Small ribosomal subunit protein bS18, found in Sodalis glossinidius (strain morsitans).